The chain runs to 199 residues: Guanylate kinase (199 aa).

Positions 19 to 198 constitute a Guanylate kinase-like domain; that stretch reads VTVAVVSGPT…AVAHLVELLS (180 aa). 26–33 is an ATP binding site; sequence GPTAVGKG.

It belongs to the guanylate kinase family.

The protein resides in the cytoplasm. It carries out the reaction GMP + ATP = GDP + ADP. Essential for recycling GMP and indirectly, cGMP. The chain is Guanylate kinase from Cutibacterium acnes (strain DSM 16379 / KPA171202) (Propionibacterium acnes).